A 200-amino-acid polypeptide reads, in one-letter code: Dephospho-CoA kinase (200 aa).

One can recognise a DPCK domain in the interval 6-200 (AIALSGGIAT…KIKAKYLEKK (195 aa)). Position 14 to 19 (14 to 19 (ATGKST)) interacts with ATP.

It belongs to the CoaE family.

It localises to the cytoplasm. It catalyses the reaction 3'-dephospho-CoA + ATP = ADP + CoA + H(+). The protein operates within cofactor biosynthesis; coenzyme A biosynthesis; CoA from (R)-pantothenate: step 5/5. Functionally, catalyzes the phosphorylation of the 3'-hydroxyl group of dephosphocoenzyme A to form coenzyme A. In Sulfurimonas denitrificans (strain ATCC 33889 / DSM 1251) (Thiomicrospira denitrificans (strain ATCC 33889 / DSM 1251)), this protein is Dephospho-CoA kinase.